The primary structure comprises 97 residues: Coiled-coil domain-containing protein 167 (97 aa).

Residues 10-79 adopt a coiled-coil conformation; sequence GVALEIDGLE…LRQENRKNML (70 aa). Residues 78–95 traverse the membrane as a helical segment; sequence MLLSVAIFILLTLVYAYW.

The protein resides in the membrane. In Homo sapiens (Human), this protein is Coiled-coil domain-containing protein 167 (CCDC167).